The following is a 100-amino-acid chain: UPF0298 protein lp_2135 (100 aa).

The protein belongs to the UPF0298 family.

It is found in the cytoplasm. The polypeptide is UPF0298 protein lp_2135 (Lactiplantibacillus plantarum (strain ATCC BAA-793 / NCIMB 8826 / WCFS1) (Lactobacillus plantarum)).